A 237-amino-acid polypeptide reads, in one-letter code: Leucyl/phenylalanyl-tRNA--protein transferase (237 aa).

Belongs to the L/F-transferase family.

Its subcellular location is the cytoplasm. It catalyses the reaction N-terminal L-lysyl-[protein] + L-leucyl-tRNA(Leu) = N-terminal L-leucyl-L-lysyl-[protein] + tRNA(Leu) + H(+). The catalysed reaction is N-terminal L-arginyl-[protein] + L-leucyl-tRNA(Leu) = N-terminal L-leucyl-L-arginyl-[protein] + tRNA(Leu) + H(+). It carries out the reaction L-phenylalanyl-tRNA(Phe) + an N-terminal L-alpha-aminoacyl-[protein] = an N-terminal L-phenylalanyl-L-alpha-aminoacyl-[protein] + tRNA(Phe). Functionally, functions in the N-end rule pathway of protein degradation where it conjugates Leu, Phe and, less efficiently, Met from aminoacyl-tRNAs to the N-termini of proteins containing an N-terminal arginine or lysine. The chain is Leucyl/phenylalanyl-tRNA--protein transferase from Shewanella baltica (strain OS223).